The following is a 1170-amino-acid chain: Protein SCAR4 (1170 aa).

Disordered regions lie at residues 180-207 (KLGK…EDSR), 356-376 (NDAD…SDDK), 631-674 (AAPK…PRDL), 701-742 (SYSG…NQTG), 783-819 (NQRQ…SSPL), 960-980 (EESK…SDTY), and 1026-1046 (HNNP…HPLE). The span at 183 to 195 (KDKRLRQSKKKGS) shows a compositional bias: basic residues. A compositionally biased stretch (basic and acidic residues) spans 198 to 207 (TIKETPEDSR). A compositionally biased stretch (polar residues) spans 356 to 365 (NDADSPASTE). The span at 366–376 (SEVKEAGSDDK) shows a compositional bias: basic and acidic residues. 4 stretches are compositionally biased toward polar residues: residues 640–668 (SQDG…TLMS), 701–716 (SYSG…IVSD), 783–818 (NQRQ…QSSP), and 967–980 (EQSP…SDTY). Residues 1105–1123 (ENDSLLEIIRSKSFNLRPA) enclose the WH2 domain.

This sequence belongs to the SCAR/WAVE family. In terms of assembly, interacts with SPK1. Expressed in expanding cotyledons, expanding leaves and expanding siliques containing developing embryos. Detected in unopened flower buds and in the expanding tip region of roots. Reduced expression in mature leaves.

Its subcellular location is the cytoplasm. The protein localises to the cytoskeleton. Functionally, involved in regulation of actin and microtubule organization. Part of a WAVE complex that activates the Arp2/3 complex. Regulates trichome branch positioning and expansion. This is Protein SCAR4 (SCAR4) from Arabidopsis thaliana (Mouse-ear cress).